Reading from the N-terminus, the 216-residue chain is Ribose-5-phosphate isomerase A (216 aa).

Substrate contacts are provided by residues 26-29 (TGST), 79-82 (DGAD), and 92-95 (KGGG). E101 functions as the Proton acceptor in the catalytic mechanism. Substrate is bound at residue K119.

This sequence belongs to the ribose 5-phosphate isomerase family. In terms of assembly, homodimer.

It carries out the reaction aldehydo-D-ribose 5-phosphate = D-ribulose 5-phosphate. Its pathway is carbohydrate degradation; pentose phosphate pathway; D-ribose 5-phosphate from D-ribulose 5-phosphate (non-oxidative stage): step 1/1. Functionally, catalyzes the reversible conversion of ribose-5-phosphate to ribulose 5-phosphate. The protein is Ribose-5-phosphate isomerase A of Legionella pneumophila (strain Lens).